The sequence spans 390 residues: S-adenosylmethionine synthase 3 (390 aa).

Position 9 (Glu9) interacts with Mg(2+). Residue His15 participates in ATP binding. Glu43 lines the K(+) pocket. L-methionine contacts are provided by Glu56 and Gln99. ATP-binding positions include 167–169 (DGK), 235–238 (SGRF), Asp246, 252–253 (RK), Ala269, Lys273, and Lys277. Residue Asp246 participates in L-methionine binding. L-methionine is bound at residue Lys277.

The protein belongs to the AdoMet synthase family. In terms of assembly, homotetramer. Mn(2+) is required as a cofactor. It depends on Mg(2+) as a cofactor. Co(2+) serves as cofactor. The cofactor is K(+). As to expression, mostly expressed in stems and leaves.

It localises to the cytoplasm. The enzyme catalyses L-methionine + ATP + H2O = S-adenosyl-L-methionine + phosphate + diphosphate. Its pathway is amino-acid biosynthesis; S-adenosyl-L-methionine biosynthesis; S-adenosyl-L-methionine from L-methionine: step 1/1. Functionally, catalyzes the formation of S-adenosylmethionine from methionine and ATP. The reaction comprises two steps that are both catalyzed by the same enzyme: formation of S-adenosylmethionine (AdoMet) and triphosphate, and subsequent hydrolysis of the triphosphate. The sequence is that of S-adenosylmethionine synthase 3 (SAM3) from Solanum lycopersicum (Tomato).